Reading from the N-terminus, the 140-residue chain is UPF0102 protein alr1796 (140 aa).

The protein belongs to the UPF0102 family.

The sequence is that of UPF0102 protein alr1796 from Nostoc sp. (strain PCC 7120 / SAG 25.82 / UTEX 2576).